We begin with the raw amino-acid sequence, 542 residues long: Cytochrome P450 monooxygenase TRI1 (542 aa).

Residues 37–54 (LIYFLCFVVLGRAVQWFL) traverse the membrane as a helical segment. 3 N-linked (GlcNAc...) asparagine glycosylation sites follow: Asn-167, Asn-297, and Asn-428. A heme-binding site is contributed by Cys-469.

This sequence belongs to the cytochrome P450 family. Heme is required as a cofactor.

It is found in the membrane. It functions in the pathway sesquiterpene biosynthesis; trichothecene biosynthesis. Functionally, cytochrome P450 monooxygenase; part of 2-gene cluster involved in trichothecene C-8 modification that mediates the biosynthesis of T2-toxin. The biosynthesis of trichothecenes begins with the cyclization of farnesyl diphosphate to trichodiene and is catalyzed by the trichodiene synthase TRI5. Trichodiene undergoes a series of oxygenations catalyzed by the cytochrome P450 monooxygenase TRI4. TRI4 controls the addition of four oxygens at C-2, C-3, C-11, and the C-12, C-13-epoxide to form the intermediate isotrichotriol. Isotrichotriol then undergoes a non-enzymatic isomerization and cyclization to form isotrichodermol. During this process, the oxygen at the C-2 position becomes the pyran ring oxygen and the hydroxyl group at C-11 is lost. More complex type A trichothecenes are built by modifying isotrichodermol through a series of paired hydroxylation and acetylation or acylation steps. Isotrichodermol is converted to isotrichodermin by the acetyltransferase TRI101. TRI101 encodes a C-3 transacetylase that acts as a self-protection or resistance factor during biosynthesis and that the presence of a free C-3 hydroxyl group is a key component of Fusarium trichothecene phytotoxicity. A second hydroxyl group is added to C-15 by the trichothecene C-15 hydroxylase TRI11, producing 15-decalonectrin, which is then acetylated by TRI3, producing calonectrin. A third hydroxyl group is added at C-4 by the cytochrome P450 monooxygenase TRI13, converting calonectrin to 3,15-diacetoxyspirpenol, which is subsequently acetylated by the acetyltransferase TRI7. A fourth hydroxyl group is added to C-8 by the cytochrome P450 monooxygenase TRI1, followed by the addition of an isovaleryl moiety by TRI16. Finally, the acetyl group is removed from the C-3 position by the trichothecene C-3 esterase TRI8 to produce T-2 toxin. The protein is Cytochrome P450 monooxygenase TRI1 of Fusarium sporotrichioides.